A 1518-amino-acid polypeptide reads, in one-letter code: Hormone receptor 4 (1518 aa).

5 disordered regions span residues 30-50, 145-327, 380-587, 672-820, and 887-913; these read RCSS…DLLA, TSST…KLSE, PSRI…QPQA, VGVG…SSVA, and SSNS…EPTD. Positions 34-46 are enriched in polar residues; the sequence is DGESIADTSTSSP. Low complexity-rich tracts occupy residues 145–189 and 208–219; these read TSST…SSSG and SSSSAISAAAAS. Residues 238-260 are compositionally biased toward gly residues; that stretch reads EGGGPAGDGSGATGGGNTSGGST. Positions 291 to 323 are enriched in low complexity; it reads STTTTTGRPTLTPTNGVLSSASAGTGISTGSSA. Positions 400 to 429 are enriched in basic and acidic residues; that stretch reads QRERERERDRERDRERERERDRDREREREQ. Composition is skewed to polar residues over residues 430–451 and 475–489; these read SISS…QLSH and RKSS…SQSM. Composition is skewed to low complexity over residues 490–529, 546–586, 681–705, and 738–799; these read QHLT…PHSL, HHQQ…QQPQ, GSVQ…QTPS, and GQSH…PSSS. Gly residues-rich tracts occupy residues 800-812 and 892-902; these read SGGG…GVGG and GLGGVGGGMGG. Residues 918–993 constitute a DNA-binding region (nuclear receptor); it reads PLVCMICEDK…QGMVLQAVRE (76 aa). 2 consecutive NR C4-type zinc fingers follow at residues 921–941 and 957–976; these read CMIC…CEGC and CVAD…CQYC. Disordered regions lie at residues 1015-1101, 1142-1210, and 1341-1371; these read KHKK…AAVA, LLQA…LPPH, and KRRG…STPI. Over residues 1021–1060 the composition is skewed to low complexity; it reads QKQQQQAAQQQQQQAAAQQQHQQQQQHQQHQQHQQQQLHS. The span at 1061-1077 shows a compositional bias: basic residues; sequence PLHHHHHQGHQSHHAQQ. Composition is skewed to low complexity over residues 1078-1101 and 1144-1193; these read QHHP…AAVA and QAPP…HHQQ. The span at 1194–1205 shows a compositional bias: gly residues; sequence QGGGGGGAGGGA. The NR LBD domain occupies 1250–1518; the sequence is HALGMIQTLI…PFVLNSASIR (269 aa). A compositionally biased stretch (low complexity) spans 1351–1368; it reads HGSPASTPLSTPTGTPLS.

This sequence belongs to the nuclear hormone receptor family. NR1 subfamily. In terms of tissue distribution, during L2 and L3 stages, strong constitutive expression is seen in the ring gland. Lower expression is detected in specific neurons of the central nervous system (CNS) (at protein level).

It is found in the nucleus. Its function is as follows. Coordinates growth and maturation by mediating endocrine responses to the attainment of critical weight during larval development. Plays a central role in the genetic cascades triggered by the steroid hormone ecdysone at the onset of metamorphosis, acting as both a repressor of the early ecdysone-induced regulatory genes and an inducer of the ftz-f1 midprepupal competence factor. The chain is Hormone receptor 4 (Hr4) from Drosophila melanogaster (Fruit fly).